Reading from the N-terminus, the 114-residue chain is Tail hub protein B (114 aa).

In terms of assembly, heterotrimer with THA. The heterotrimers further assemble as 12 docking hubs that anchor the trimeric tail fibers.

Its subcellular location is the virion. Functionally, forms the tail hub together with tail hub protein A (THA). This Bacteroides intestinalis (Bacteroides phage PhiCrAss001) protein is Tail hub protein B.